A 554-amino-acid chain; its full sequence is uncharacterized protein (554 aa).

Residues 1-25 form a disordered region; sequence MSSSIPPRLYDMSPTESKKQEDVSE. Serine 13 bears the Phosphoserine mark. The next 6 membrane-spanning stretches (helical) occupy residues 82–102, 120–140, 149–169, 171–191, 210–230, and 253–273; these read FFVA…TSLI, APYL…VWSL, WAFN…GASP, FASI…NLPV, VMSF…WGLI, and FLFT…LVSV. Residue serine 334 is modified to Phosphoserine. Helical transmembrane passes span 364-384, 412-432, 437-457, 462-482, 497-517, and 525-545; these read LAIS…AFPL, SLIV…LVEF, KGTL…STTA, AYLG…GVLY, AVGL…VIAM, and APIF…VFFP.

The protein belongs to the major facilitator superfamily.

Its subcellular location is the endoplasmic reticulum. It is found in the membrane. This is an uncharacterized protein from Schizosaccharomyces pombe (strain 972 / ATCC 24843) (Fission yeast).